A 444-amino-acid chain; its full sequence is Glutamate--tRNA ligase 2 (444 aa).

A 'HIGH' region motif is present at residues 8 to 18; it reads PSPTGHLHAGN. The 'KMSKS' region signature appears at 241-245; that stretch reads KLSKR. Residue lysine 244 coordinates ATP.

This sequence belongs to the class-I aminoacyl-tRNA synthetase family. Glutamate--tRNA ligase type 1 subfamily. As to quaternary structure, monomer.

It is found in the cytoplasm. It carries out the reaction tRNA(Glu) + L-glutamate + ATP = L-glutamyl-tRNA(Glu) + AMP + diphosphate. Its function is as follows. Catalyzes the attachment of glutamate to tRNA(Glu) in a two-step reaction: glutamate is first activated by ATP to form Glu-AMP and then transferred to the acceptor end of tRNA(Glu). The polypeptide is Glutamate--tRNA ligase 2 (Acidiphilium cryptum (strain JF-5)).